We begin with the raw amino-acid sequence, 504 residues long: Syntaphilin (504 aa).

The tract at residues 1 to 74 (MAMSLQGSRR…HGIKPPTPEQ (74 aa)) is disordered. 2 stretches are compositionally biased toward low complexity: residues 7-26 (GSRR…VSVR) and 33-49 (SLSS…SDSS). Residues 79 to 161 (LQQKEVCIRH…VKNNLIDKDK (83 aa)) are a coiled coil. Positions 191-244 (VAKEEGTGESAGGSPARSLTRSSTYTKLSDPAVCGDRQAGDPSNTPAEDRADSG) are disordered. A phosphoserine mark is found at serine 200 and serine 204. Polar residues predominate over residues 207-217 (RSLTRSSTYTK). Phosphothreonine is present on threonine 214. Serine 219 is subject to Phosphoserine. Residue threonine 235 is modified to Phosphothreonine. Residues 437 to 456 (YIVDLLAVVVPAVPTVAWLC) traverse the membrane as a helical segment.

In terms of assembly, binds to STX1A. Interacts with DNM1; this interaction inhibits the binding of DNM1 to AMPH and DNM1-receptor-mediated endocytosis.

The protein localises to the membrane. It localises to the synapse. The protein resides in the synaptosome. In terms of biological role, inhibits SNARE complex formation by absorbing free STX1A. The sequence is that of Syntaphilin from Rattus norvegicus (Rat).